Here is a 93-residue protein sequence, read N- to C-terminus: Stromal cell-derived factor 1 (93 aa).

The first 21 residues, 1–21, serve as a signal peptide directing secretion; the sequence is MDAKVVAVLALVLAALCLSDG. Residues 22–23 carry the Receptor activation motif motif; the sequence is KP. Residues 29-33 are receptor and heparin binding; it reads RCPCR. 2 disulfide bridges follow: cysteine 30–cysteine 55 and cysteine 32–cysteine 71. Receptor binding stretches follow at residues 39–41, 48–50, and 60–70; these read VAR, KIL, and VARLKNNNRQV. Heparin is bound by residues 41 to 51, arginine 62, glutamine 69, and lysine 85; that span reads RANVKHLKILN.

The protein belongs to the intercrine alpha (chemokine CxC) family. As to quaternary structure, monomer or homodimer; in equilibrium. Dimer formation is induced by non acidic pH and the presence of multivalent anions, and by binding to CXCR4 or heparin. Monomeric form is required for full chemotactic activity and resistance to ischemia/reperfusion injury, whereas the dimeric form acts as a partial agonist of CXCR4, stimulating Ca2+ mobilization but with no chemotactic activity and instead acts as a selective antagonist that blocks chemotaxis induced by the monomeric form. Interacts with the N-terminus of ACKR3. Interacts with integrin subunit ITGB3 (via the allosteric site (site 2)). Interacts with TNFAIP6 (via Link domain).

The protein localises to the secreted. Chemoattractant active on T-lymphocytes and monocytes but not neutrophils. Activates the C-X-C chemokine receptor CXCR4 to induce a rapid and transient rise in the level of intracellular calcium ions and chemotaxis. Also binds to atypical chemokine receptor ACKR3, which activates the beta-arrestin pathway and acts as a scavenger receptor for SDF-1. Acts as a positive regulator of monocyte migration and a negative regulator of monocyte adhesion via the LYN kinase. Binds to the allosteric site (site 2) of integrins and activates integrins ITGAV:ITGB3, ITGA4:ITGB1 and ITGA5:ITGB1 in a CXCR4-independent manner. Stimulates migration of monocytes and T-lymphocytes through its receptors, CXCR4 and ACKR3, and decreases monocyte adherence to surfaces coated with ICAM-1, a ligand for beta-2 integrins. SDF1A/CXCR4 signaling axis inhibits beta-2 integrin LFA-1 mediated adhesion of monocytes to ICAM-1 through LYN kinase. Plays a protective role after myocardial infarction. Has several critical functions during embryonic development; required for B-cell lymphopoiesis, myelopoiesis in bone marrow and heart ventricular septum formation. Stimulates the proliferation of bone marrow-derived B-cell progenitors in the presence of IL7 as well as growth of stromal cell-dependent pre-B-cells. This chain is Stromal cell-derived factor 1 (CXCL12), found in Felis catus (Cat).